Reading from the N-terminus, the 236-residue chain is Ribonuclease 3 (236 aa).

The RNase III domain occupies 6–140 (FLDFLKQNRI…FIGAVAQDQG (135 aa)). Residue glutamate 46 participates in Mg(2+) binding. The active site involves aspartate 50. Residues aspartate 126 and glutamate 129 each coordinate Mg(2+). Glutamate 129 is a catalytic residue. The 66-residue stretch at 166-231 (DYKTIFQEQA…AKNAILKLDD (66 aa)) folds into the DRBM domain.

Belongs to the ribonuclease III family. In terms of assembly, homodimer. Requires Mg(2+) as cofactor.

Its subcellular location is the cytoplasm. It catalyses the reaction Endonucleolytic cleavage to 5'-phosphomonoester.. In terms of biological role, digests double-stranded RNA. Involved in the processing of primary rRNA transcript to yield the immediate precursors to the large and small rRNAs (23S and 16S). Processes some mRNAs, and tRNAs when they are encoded in the rRNA operon. Processes pre-crRNA and tracrRNA of type II CRISPR loci if present in the organism. This is Ribonuclease 3 from Ureaplasma parvum serovar 3 (strain ATCC 700970).